A 438-amino-acid polypeptide reads, in one-letter code: sn-glycerol-3-phosphate-binding periplasmic protein UgpB (438 aa).

Positions 1 to 23 (MKPLRYTASALALGLALMANAQA) are cleaved as a signal peptide. Positions 65, 89, 144, 270, 307, 346, and 397 each coordinate sn-glycerol 3-phosphate.

The protein belongs to the bacterial solute-binding protein 1 family. The complex is composed of two ATP-binding proteins (UgpC), two transmembrane proteins (UgpA and UgpE) and a solute-binding protein (UgpB).

The protein localises to the periplasm. In terms of biological role, part of the ABC transporter complex UgpBAEC involved in sn-glycerol-3-phosphate (G3P) import. Binds G3P. The sequence is that of sn-glycerol-3-phosphate-binding periplasmic protein UgpB (ugpB) from Escherichia coli O6:K15:H31 (strain 536 / UPEC).